Consider the following 146-residue polypeptide: Large ribosomal subunit protein mL49 (146 aa).

The transit peptide at 1–38 (MISSCVTRCFGRGKCLPGPATASIYQTIRCISTNSNKA) directs the protein to the mitochondrion.

This sequence belongs to the mitochondrion-specific ribosomal protein mL49 family. In terms of assembly, component of the mitochondrial large ribosomal subunit (mt-LSU). Mature yeast 74S mitochondrial ribosomes consist of a small (37S) and a large (54S) subunit. The 37S small subunit contains a 15S ribosomal RNA (15S mt-rRNA) and 34 different proteins. The 54S large subunit contains a 21S rRNA (21S mt-rRNA) and 46 different proteins.

Its subcellular location is the mitochondrion. Functionally, component of the mitochondrial ribosome (mitoribosome), a dedicated translation machinery responsible for the synthesis of mitochondrial genome-encoded proteins, including at least some of the essential transmembrane subunits of the mitochondrial respiratory chain. The mitoribosomes are attached to the mitochondrial inner membrane and translation products are cotranslationally integrated into the membrane. This is Large ribosomal subunit protein mL49 (IMG2) from Saccharomyces cerevisiae (strain ATCC 204508 / S288c) (Baker's yeast).